The chain runs to 102 residues: Protein PDF (102 aa).

A signal peptide spans 1-24 (MARYTYLVALVLLAICCQWGYCGA). An Alanine amide modification is found at A100.

Belongs to the arthropod PDH family. As to expression, predominantly expressed in adult head. Expressed at higher level in males than in females. In adult brain, it is specifically expressed in the ventral lateral neurons (LNvs) as well as in 2-4 tritocerebral cells and 4-6 abdominal cells.

The protein localises to the secreted. Neuropeptide PDF is the main transmitter regulating circadian locomotor rhythms. Required to maintain behavioral rhythms under constant conditions by coordinating pacemaker interactions in the circadian system. Together with CCHa1, involved in regulating intensity and periodicity of daytime activity, possibly by modulating rhythmic expression of circadian protein PER/period in a subset of clock neurons, but not TIM/timeless. Acts on small and large ventral lateral neurons to control sleep and regulates the state transition from sleep to wake. In Drosophila melanogaster (Fruit fly), this protein is Protein PDF (Pdf).